We begin with the raw amino-acid sequence, 331 residues long: Ubiquinone biosynthesis protein UbiU (331 aa).

Residues Cys-169, Cys-176, Cys-193, and Cys-232 each contribute to the [4Fe-4S] cluster site.

The protein belongs to the peptidase U32 family. UbiU subfamily. As to quaternary structure, forms a heterodimer with UbiV. The cofactor is [4Fe-4S] cluster.

It functions in the pathway cofactor biosynthesis; ubiquinone biosynthesis. In terms of biological role, required for O(2)-independent ubiquinone (coenzyme Q) biosynthesis. Together with UbiV, is essential for the C6-hydroxylation reaction in the oxygen-independent ubiquinone biosynthesis pathway. This Escherichia coli (strain K12) protein is Ubiquinone biosynthesis protein UbiU.